The following is a 95-amino-acid chain: Large ribosomal subunit protein uL23 (95 aa).

This sequence belongs to the universal ribosomal protein uL23 family. In terms of assembly, part of the 50S ribosomal subunit. Contacts protein L29, and trigger factor when it is bound to the ribosome.

One of the early assembly proteins it binds 23S rRNA. One of the proteins that surrounds the polypeptide exit tunnel on the outside of the ribosome. Forms the main docking site for trigger factor binding to the ribosome. The protein is Large ribosomal subunit protein uL23 of Syntrophotalea carbinolica (strain DSM 2380 / NBRC 103641 / GraBd1) (Pelobacter carbinolicus).